An 869-amino-acid chain; its full sequence is Dimethylglycine dehydrogenase, mitochondrial (869 aa).

Residues 1 to 43 (MLRPGALRLRGLALRGSPRRPSSAGLREGQESPASPPEWKDRA) constitute a mitochondrion transit peptide. The disordered stretch occupies residues 14–39 (LRGSPRRPSSAGLREGQESPASPPEW). FAD contacts are provided by residues 52–53 (CV), 73–74 (EK), and 80–88 (GSTWHAAGL). His-84 is subject to Tele-8alpha-FAD histidine. N6-acetyllysine is present on Lys-107. Lys-141 is modified (N6-acetyllysine; alternate). Position 141 is an N6-succinyllysine; alternate (Lys-141). Position 161 is an N6-acetyllysine (Lys-161). Residue Val-212 participates in FAD binding. The residue at position 216 (Lys-216) is an N6-acetyllysine. Position 244 (Trp-244) interacts with FAD. An N6-succinyllysine mark is found at Lys-310 and Lys-312. An N6-acetyllysine mark is found at Lys-328 and Lys-353. 390–395 (FGYGII) serves as a coordination point for FAD. N6-acetyllysine; alternate occurs at positions 427, 469, and 516. Residues Lys-427, Lys-469, and Lys-516 each carry the N6-succinyllysine; alternate modification. 573–575 (ELT) serves as a coordination point for (6S)-5,6,7,8-tetrahydrofolate. The residue at position 648 (Lys-648) is an N6-acetyllysine; alternate. N6-succinyllysine; alternate is present on Lys-648. Residues Tyr-669, 676 to 678 (ELY), and Tyr-737 each bind (6S)-5,6,7,8-tetrahydrofolate. Lys-757 is subject to N6-acetyllysine. Lys-786 carries the N6-acetyllysine; alternate modification. Position 786 is an N6-succinyllysine; alternate (Lys-786). Position 788 is an N6-succinyllysine (Lys-788).

Belongs to the GcvT family. FAD is required as a cofactor.

It is found in the mitochondrion. The catalysed reaction is (6S)-5,6,7,8-tetrahydrofolyl-(gamma-L-Glu)(n) + N,N-dimethylglycine + oxidized [electron-transfer flavoprotein] + H(+) = (6R)-5,10-methylenetetrahydrofolyl-(gamma-L-Glu)(n) + sarcosine + reduced [electron-transfer flavoprotein]. The protein operates within amine and polyamine degradation; betaine degradation; sarcosine from betaine: step 2/2. Functionally, catalyzes the demethylation of N,N-dimethylglycine to sarcosine. Also has activity with sarcosine in vitro. This Mus musculus (Mouse) protein is Dimethylglycine dehydrogenase, mitochondrial (Dmgdh).